Here is a 69-residue protein sequence, read N- to C-terminus: Sec-independent protein translocase protein TatA (69 aa).

The helical transmembrane segment at 1 to 21 threads the bilayer; sequence MFGLGGQELVLILLIILLLFG. The segment at 48–69 is disordered; it reads EELNKAVDDTPEKEKKSSSEKS.

The protein belongs to the TatA/E family. In terms of assembly, forms a complex with TatC.

The protein resides in the cell inner membrane. In terms of biological role, part of the twin-arginine translocation (Tat) system that transports large folded proteins containing a characteristic twin-arginine motif in their signal peptide across membranes. TatA could form the protein-conducting channel of the Tat system. The polypeptide is Sec-independent protein translocase protein TatA (Chlorobium phaeobacteroides (strain BS1)).